The following is a 243-amino-acid chain: MAELLLGVNIDHIATLRNARGTDYPDPVQAAFIAEQAGADGITVHLREDRRHITDRDVRILRQTLHTRMNLEMAVTEEMLAIAVETRPHFCCLVPEKRQEVTTEGGLDVAGQRDKMRDACARLAAAGIQVSLFIDADERQINAAAEVGAPFIEIHTGCYANAETDAEQAKELARIASAATLAARLGLKVNAGHGLTYHNVKAIAALPEMHELNIGHAIIGRAVMTGLKEAVAEMKRLMLEARG.

Asn9 lines the 3-amino-2-oxopropyl phosphate pocket. Residue 11 to 12 (DH) participates in 1-deoxy-D-xylulose 5-phosphate binding. A 3-amino-2-oxopropyl phosphate-binding site is contributed by Arg20. His45 serves as the catalytic Proton acceptor. 1-deoxy-D-xylulose 5-phosphate contacts are provided by Arg47 and His52. Glu72 acts as the Proton acceptor in catalysis. Thr102 contacts 1-deoxy-D-xylulose 5-phosphate. His193 acts as the Proton donor in catalysis. 3-amino-2-oxopropyl phosphate-binding positions include Gly194 and 215–216 (GH).

This sequence belongs to the PNP synthase family. As to quaternary structure, homooctamer; tetramer of dimers.

It is found in the cytoplasm. It carries out the reaction 3-amino-2-oxopropyl phosphate + 1-deoxy-D-xylulose 5-phosphate = pyridoxine 5'-phosphate + phosphate + 2 H2O + H(+). It participates in cofactor biosynthesis; pyridoxine 5'-phosphate biosynthesis; pyridoxine 5'-phosphate from D-erythrose 4-phosphate: step 5/5. Catalyzes the complicated ring closure reaction between the two acyclic compounds 1-deoxy-D-xylulose-5-phosphate (DXP) and 3-amino-2-oxopropyl phosphate (1-amino-acetone-3-phosphate or AAP) to form pyridoxine 5'-phosphate (PNP) and inorganic phosphate. The sequence is that of Pyridoxine 5'-phosphate synthase from Salmonella typhi.